A 1126-amino-acid chain; its full sequence is Ubiquitin carboxyl-terminal hydrolase 16/45 (1126 aa).

The span at 1-15 (MVKKRQADSRDHDCS) shows a compositional bias: basic and acidic residues. The segment at 1 to 44 (MVKKRQADSRDHDCSTDSGNEDLHHRKGLGSPGQSDGATPTTAS) is disordered. Residues 32 to 44 (PGQSDGATPTTAS) show a composition bias toward polar residues. The UBP-type zinc finger occupies 43-181 (ASCQHIKKAV…ELVKKLAQKP (139 aa)). Cys-45, His-47, Cys-70, Cys-73, Cys-111, Cys-114, Cys-119, His-126, His-130, His-139, Cys-152, and Cys-155 together coordinate Zn(2+). 2 stretches are compositionally biased toward low complexity: residues 215-229 (GGSFDDSSSRGSLAA) and 254-264 (SSGLSTSDSLT). Residues 215-264 (GGSFDDSSSRGSLAAAGGGGGVGSSRNRQVAIPMPPPEPSSGLSTSDSLT) are disordered. Cys-315 serves as the catalytic Nucleophile. Disordered stretches follow at residues 513–547 (KPQPPQRRKPSPELSLTSSSSSVTPSTGQPTINTK), 570–762 (ASLG…SGSS), and 795–833 (EQGASNGTEDADGEAKAIEQPEKTPSQAQAMAQAQARTK). Residues 524–539 (PELSLTSSSSSVTPST) are compositionally biased toward low complexity. Over residues 586 to 598 (QRKAKRAAKKRQK) the composition is skewed to basic residues. Composition is skewed to low complexity over residues 599–614 (SSLNLNGNDSGNGNEL) and 646–657 (TEDSTTSSVTTS). Polar residues predominate over residues 674–701 (APSTNNVPSSTASLTAPSKTYMDSNGNA). Positions 705 to 718 (GEKRDDTPEHMDKD) are enriched in basic and acidic residues. The segment covering 730–762 (ATSPAPTATNSSTSTSATGNNNSVAGSGLSGSS) has biased composition (low complexity). A compositionally biased stretch (basic and acidic residues) spans 807-816 (GEAKAIEQPE). Low complexity predominate over residues 821–830 (QAQAMAQAQA). His-984 acts as the Proton acceptor in catalysis. The segment at 1037–1089 (LKVLDDSDDFSNSSSNSSTSDESQTPATPLEEQQTQQAQQPQQPQQLEEAANV) is disordered. Residues 1046–1086 (FSNSSSNSSTSDESQTPATPLEEQQTQQAQQPQQPQQLEEA) show a composition bias toward low complexity.

It belongs to the peptidase C19 family.

The enzyme catalyses Thiol-dependent hydrolysis of ester, thioester, amide, peptide and isopeptide bonds formed by the C-terminal Gly of ubiquitin (a 76-residue protein attached to proteins as an intracellular targeting signal).. Functionally, involved in the regulation of DNA damage repair. This is Ubiquitin carboxyl-terminal hydrolase 16/45 from Drosophila melanogaster (Fruit fly).